The chain runs to 469 residues: Arginine biosynthesis bifunctional protein ArgJ, mitochondrial (469 aa).

The substrate site is built by T199, K228, T239, E325, N464, and T469. Catalysis depends on T239, which acts as the Nucleophile.

The protein belongs to the ArgJ family. Heterodimer of an alpha and a beta chain. Post-translationally, the alpha and beta chains are autoproteolytically processed from a single precursor protein within the mitochondrion.

Its subcellular location is the mitochondrion matrix. The enzyme catalyses N(2)-acetyl-L-ornithine + L-glutamate = N-acetyl-L-glutamate + L-ornithine. It catalyses the reaction L-glutamate + acetyl-CoA = N-acetyl-L-glutamate + CoA + H(+). Its pathway is amino-acid biosynthesis; L-arginine biosynthesis; L-ornithine and N-acetyl-L-glutamate from L-glutamate and N(2)-acetyl-L-ornithine (cyclic): step 1/1. The protein operates within amino-acid biosynthesis; L-arginine biosynthesis; N(2)-acetyl-L-ornithine from L-glutamate: step 1/4. Functionally, catalyzes two activities which are involved in the cyclic version of arginine biosynthesis: the synthesis of acetylglutamate from glutamate and acetyl-CoA, and of ornithine by transacetylation between acetylornithine and glutamate. The protein is Arginine biosynthesis bifunctional protein ArgJ, mitochondrial of Sordaria macrospora (strain ATCC MYA-333 / DSM 997 / K(L3346) / K-hell).